We begin with the raw amino-acid sequence, 377 residues long: 23S rRNA (uracil(747)-C(5))-methyltransferase RlmC (377 aa).

[4Fe-4S] cluster is bound by residues C3, C11, C14, and C87. Positions 212, 241, 262, and 307 each coordinate S-adenosyl-L-methionine. The active-site Nucleophile is C334.

Belongs to the class I-like SAM-binding methyltransferase superfamily. RNA M5U methyltransferase family. RlmC subfamily.

The catalysed reaction is uridine(747) in 23S rRNA + S-adenosyl-L-methionine = 5-methyluridine(747) in 23S rRNA + S-adenosyl-L-homocysteine + H(+). Functionally, catalyzes the formation of 5-methyl-uridine at position 747 (m5U747) in 23S rRNA. The sequence is that of 23S rRNA (uracil(747)-C(5))-methyltransferase RlmC from Photorhabdus laumondii subsp. laumondii (strain DSM 15139 / CIP 105565 / TT01) (Photorhabdus luminescens subsp. laumondii).